The chain runs to 103 residues: uncharacterized protein (103 aa).

A CHCH domain is found at Phe10 to Gln63. Short sequence motifs (cx9C motif) lie at residues Cys13–Cys23 and Cys45–Cys55. 2 disulfide bridges follow: Cys13–Cys55 and Cys23–Cys45. Residues Thr80–Asn90 are compositionally biased toward basic and acidic residues. The tract at residues Thr80–Ser103 is disordered. Positions Asn91–Ser103 are enriched in polar residues.

This sequence belongs to the TRIAP1/MDM35 family.

This is an uncharacterized protein from Caenorhabditis elegans.